We begin with the raw amino-acid sequence, 180 residues long: Regulator of G-protein signaling 8 (180 aa).

Ser-26 is modified (phosphoserine). One can recognise an RGS domain in the interval 56–171 (SFDVLLSHKY…FLRSKMYLDL (116 aa)).

Interacts with GNAO1 and GNAI3. In terms of tissue distribution, expressed at high levels in brain. Very little expression detected in other tissues. Detected in Purkinje cells in the cerebellum.

Its subcellular location is the cell membrane. The protein localises to the membrane. The protein resides in the perikaryon. It is found in the cell projection. It localises to the dendrite. Its subcellular location is the nucleus. Its function is as follows. Regulates G protein-coupled receptor signaling cascades, including signaling via muscarinic acetylcholine receptor CHRM2 and dopamine receptor DRD2. Inhibits signal transduction by increasing the GTPase activity of G protein alpha subunits, thereby driving them into their inactive GDP-bound form. Modulates the activity of potassium channels that are activated in response to DRD2 and CHRM2 signaling. The polypeptide is Regulator of G-protein signaling 8 (Rgs8) (Rattus norvegicus (Rat)).